The sequence spans 1407 residues: DNA-directed RNA polymerase subunit beta' (1407 aa).

Cysteine 70, cysteine 72, cysteine 85, and cysteine 88 together coordinate Zn(2+). Mg(2+)-binding residues include aspartate 460, aspartate 462, and aspartate 464. Zn(2+) contacts are provided by cysteine 814, cysteine 888, cysteine 895, and cysteine 898.

It belongs to the RNA polymerase beta' chain family. The RNAP catalytic core consists of 2 alpha, 1 beta, 1 beta' and 1 omega subunit. When a sigma factor is associated with the core the holoenzyme is formed, which can initiate transcription. Mg(2+) serves as cofactor. Requires Zn(2+) as cofactor.

It catalyses the reaction RNA(n) + a ribonucleoside 5'-triphosphate = RNA(n+1) + diphosphate. In terms of biological role, DNA-dependent RNA polymerase catalyzes the transcription of DNA into RNA using the four ribonucleoside triphosphates as substrates. In Salmonella paratyphi A (strain ATCC 9150 / SARB42), this protein is DNA-directed RNA polymerase subunit beta'.